The primary structure comprises 358 residues: Peroxisome biogenesis protein 3-1 (358 aa).

The chain crosses the membrane as a helical span at residues 15–32 (ILVTTTCLGSGYLLYKLY). Residues 33-62 (NAHTRKLADLERELANERENDEIIKTQMKA) are a coiled coil.

The protein belongs to the peroxin-3 family.

The protein localises to the peroxisome membrane. In terms of biological role, involved in morphology determination of peroxisomes, but not in import of peroxisomal matrix proteins. May act as a docking factor for PEX19 and be necessary for the import of peroxisomal membrane proteins in the peroxisomes. In Arabidopsis thaliana (Mouse-ear cress), this protein is Peroxisome biogenesis protein 3-1 (PEX3-1).